We begin with the raw amino-acid sequence, 945 residues long: Isoleucine--tRNA ligase (945 aa).

Residues 66-76 (PYANGDIHLGH) carry the 'HIGH' region motif. An L-isoleucyl-5'-AMP-binding site is contributed by E581. Residues 622–626 (KMSKS) carry the 'KMSKS' region motif. K625 is an ATP binding site. Residues C908, C911, C928, and C931 each coordinate Zn(2+).

It belongs to the class-I aminoacyl-tRNA synthetase family. IleS type 1 subfamily. Monomer. Requires Zn(2+) as cofactor.

Its subcellular location is the cytoplasm. It catalyses the reaction tRNA(Ile) + L-isoleucine + ATP = L-isoleucyl-tRNA(Ile) + AMP + diphosphate. Catalyzes the attachment of isoleucine to tRNA(Ile). As IleRS can inadvertently accommodate and process structurally similar amino acids such as valine, to avoid such errors it has two additional distinct tRNA(Ile)-dependent editing activities. One activity is designated as 'pretransfer' editing and involves the hydrolysis of activated Val-AMP. The other activity is designated 'posttransfer' editing and involves deacylation of mischarged Val-tRNA(Ile). The polypeptide is Isoleucine--tRNA ligase (Paraburkholderia phymatum (strain DSM 17167 / CIP 108236 / LMG 21445 / STM815) (Burkholderia phymatum)).